A 395-amino-acid polypeptide reads, in one-letter code: Glyceraldehyde-3-phosphate dehydrogenase, testis-specific (395 aa).

Residues 1-60 (MSKRDIVLTNVTVVQLLRQPCPEPRVEAEPEPPAQPQPQPEPIKEEVPPPPPPPPAPKKV) are testis-specific N-terminal extension. Residues 19–59 (QPCPEPRVEAEPEPPAQPQPQPEPIKEEVPPPPPPPPAPKK) form a disordered region. 2 stretches are compositionally biased toward pro residues: residues 31–41 (EPPAQPQPQPE) and 48–57 (PPPPPPPPAP). Residues 72 to 73 (RI), Asp-93, and Lys-138 each bind NAD(+). D-glyceraldehyde 3-phosphate contacts are provided by residues 210 to 212 (SCT), Thr-241, 270 to 271 (TG), and Arg-293. The active-site Nucleophile is Cys-211. An NAD(+)-binding site is contributed by Asn-375.

The protein belongs to the glyceraldehyde-3-phosphate dehydrogenase family. As to quaternary structure, homotetramer.

The protein localises to the cytoplasm. It catalyses the reaction D-glyceraldehyde 3-phosphate + phosphate + NAD(+) = (2R)-3-phospho-glyceroyl phosphate + NADH + H(+). Its pathway is carbohydrate degradation; glycolysis; pyruvate from D-glyceraldehyde 3-phosphate: step 1/5. Functionally, may play an important role in regulating the switch between different pathways for energy production during spermiogenesis and in the spermatozoon. Required for sperm motility and male fertility. This Bos taurus (Bovine) protein is Glyceraldehyde-3-phosphate dehydrogenase, testis-specific (GAPDHS).